Consider the following 182-residue polypeptide: Adenine phosphoribosyltransferase (182 aa).

This sequence belongs to the purine/pyrimidine phosphoribosyltransferase family. Homodimer.

The protein localises to the cytoplasm. It catalyses the reaction AMP + diphosphate = 5-phospho-alpha-D-ribose 1-diphosphate + adenine. Its pathway is purine metabolism; AMP biosynthesis via salvage pathway; AMP from adenine: step 1/1. Functionally, catalyzes a salvage reaction resulting in the formation of AMP, that is energically less costly than de novo synthesis. This Campylobacter curvus (strain 525.92) protein is Adenine phosphoribosyltransferase.